The primary structure comprises 837 residues: Striatin-interacting protein 1 (837 aa).

An N-acetylmethionine modification is found at Met1. Residues 1-67 (MEPAAGTPGP…DSEGYSESPD (67 aa)) form a disordered region. Positions 18–35 (PQPPPPPPPATAQPPPGA) are enriched in pro residues. Basic and acidic residues predominate over residues 47 to 60 (KAREFNRNQRKDSE). A phosphoserine mark is found at Ser59, Ser335, and Ser339. Positions 336-423 (PPASASDLIE…DRLTCPKGLP (88 aa)) are disordered. A compositionally biased stretch (basic and acidic residues) spans 356-377 (KALIKQDNLDAFNERDPYKADD). Residues 378–391 (SREEEEENDDDNSL) are compositionally biased toward acidic residues. Residue Ser788 is modified to Phosphoserine. The required for STRIPAK core complex formation stretch occupies residues 796–837 (DNCLQSVLGQRVDLPEDFQMNYDLWLEREVFSKPISWEELLQ).

This sequence belongs to the STRIP family. Part of the core of STRIPAK complexes composed of PP2A catalytic and scaffolding subunits, the striatins (PP2A regulatory subunits), the striatin-associated proteins MOB4, STRIP1 and STRIP2, PDCD10 and members of the STE20 kinases, such as STK24 and STK26. The STRIPAK complex can be extended by adapter proteins such as SLMAP:SIKE1, CTTNBP2 or CTTNBP2NL. Interacts with CDC42BPB. Interacts with CTTNBP2NL.

The protein resides in the cytoplasm. Its function is as follows. Plays a role in the regulation of cell morphology and cytoskeletal organization. Required in the cortical actin filament dynamics and cell shape. Part of the striatin-interacting phosphatase and kinase (STRIPAK) complexes. STRIPAK complexes have critical roles in protein (de)phosphorylation and are regulators of multiple signaling pathways including Hippo, MAPK, nuclear receptor and cytoskeleton remodeling. Different types of STRIPAK complexes are involved in a variety of biological processes such as cell growth, differentiation, apoptosis, metabolism and immune regulation. The protein is Striatin-interacting protein 1 (STRIP1) of Bos taurus (Bovine).